Here is a 147-residue protein sequence, read N- to C-terminus: Large ribosomal subunit protein uL13 (147 aa).

It belongs to the universal ribosomal protein uL13 family. Part of the 50S ribosomal subunit.

In terms of biological role, this protein is one of the early assembly proteins of the 50S ribosomal subunit, although it is not seen to bind rRNA by itself. It is important during the early stages of 50S assembly. The protein is Large ribosomal subunit protein uL13 of Corynebacterium diphtheriae (strain ATCC 700971 / NCTC 13129 / Biotype gravis).